The primary structure comprises 349 residues: Decapping nuclease RAI1 (349 aa).

Glu-157 provides a ligand contact to a divalent metal cation. Residue Glu-205 coordinates substrate. Asp-207, Glu-222, and Leu-223 together coordinate a divalent metal cation. 2 residues coordinate substrate: Lys-224 and Gln-248.

This sequence belongs to the DXO/Dom3Z family. As to quaternary structure, interacts with RAT1; the interaction is direct, stabilizes RAT1 protein structure and stimulates its exoribonuclease activity. The interaction also stimulates RAI1 pyrophosphohydrolase activity, probably by recruiting it to mRNA substrates. Requires a divalent metal cation as cofactor.

The protein localises to the nucleus. The enzyme catalyses a 5'-end NAD(+)-phospho-ribonucleoside in mRNA + H2O = a 5'-end phospho-ribonucleoside in mRNA + NAD(+) + H(+). It catalyses the reaction a 5'-end (N(7)-methyl 5'-triphosphoguanosine)-ribonucleoside-ribonucleotide in mRNA + H2O = a (N(7)-methyl 5'-triphosphoguanosine)-nucleoside + a 5'-end phospho-ribonucleoside in mRNA + H(+). It carries out the reaction a 5'-end triphospho-ribonucleoside in mRNA + H2O = a 5'-end phospho-ribonucleoside in mRNA + diphosphate + H(+). Functionally, decapping enzyme for NAD-capped RNAs: specifically hydrolyzes the nicotinamide adenine dinucleotide (NAD) cap from a subset of RNAs by removing the entire NAD moiety from the 5'-end of an NAD-capped RNA. The NAD-cap is present at the 5'-end of some RNAs and snoRNAs. In contrast to the canonical 5'-end N7 methylguanosine (m7G) cap, the NAD cap promotes mRNA decay. Also acts as a non-canonical decapping enzyme that removes the entire cap structure of m7G capped or incompletely capped RNAs. Has decapping activity toward incomplete 5'-end m7G cap mRNAs such as unmethylated 5'-end-capped RNA (cap0), while it has no activity toward 2'-O-ribose methylated m7G cap (cap1). Also possesses RNA 5'-pyrophosphohydrolase activity by hydrolyzing the 5'-end triphosphate to release pyrophosphates. Stimulates exoribonuclease activity of Rat1, allowing it to degrade RNAs with stable secondary structure more effectively. This Yarrowia lipolytica (strain CLIB 122 / E 150) (Yeast) protein is Decapping nuclease RAI1 (RAI1).